The chain runs to 546 residues: Apolipoprotein N-acyltransferase 1 (546 aa).

The next 7 helical transmembrane spans lie at 14–34 (FLLF…PLLP), 41–61 (AYGA…FAVV), 62–82 (FWGG…LFVF), 85–105 (VALC…CLAL), 122–142 (LVWL…PYGV), 151–171 (LPLI…LVVF), and 194–214 (FLSA…LCGF). The CN hydrolase domain maps to 233-502 (AKVALVQPNG…PGVLVADVPI (270 aa)). Glu280 serves as the catalytic Proton acceptor. The active site involves Lys361. The Nucleophile role is filled by Cys413. A helical transmembrane segment spans residues 514 to 534 (GDALGVFFCVASLFILIAGGV).

The protein belongs to the CN hydrolase family. Apolipoprotein N-acyltransferase subfamily.

The protein localises to the cell inner membrane. It catalyses the reaction N-terminal S-1,2-diacyl-sn-glyceryl-L-cysteinyl-[lipoprotein] + a glycerophospholipid = N-acyl-S-1,2-diacyl-sn-glyceryl-L-cysteinyl-[lipoprotein] + a 2-acyl-sn-glycero-3-phospholipid + H(+). The protein operates within protein modification; lipoprotein biosynthesis (N-acyl transfer). Functionally, catalyzes the phospholipid dependent N-acylation of the N-terminal cysteine of apolipoprotein, the last step in lipoprotein maturation. The sequence is that of Apolipoprotein N-acyltransferase 1 from Treponema pallidum (strain Nichols).